A 314-amino-acid chain; its full sequence is Putative S-adenosyl-L-methionine-dependent methyltransferase MRA_3805 (314 aa).

Residues aspartate 132 and 161–162 (DL) each bind S-adenosyl-L-methionine.

This sequence belongs to the UPF0677 family.

Its function is as follows. Exhibits S-adenosyl-L-methionine-dependent methyltransferase activity. The chain is Putative S-adenosyl-L-methionine-dependent methyltransferase MRA_3805 from Mycobacterium tuberculosis (strain ATCC 25177 / H37Ra).